The sequence spans 90 residues: Long neurotoxin 7 (90 aa).

The first 21 residues, 1–21, serve as a signal peptide directing secretion; that stretch reads MKTLLLTLVLVTIMCLDLGYT. 5 disulfide bridges follow: C24–C41, C35–C62, C47–C51, C66–C77, and C78–C83.

It belongs to the three-finger toxin family. Long-chain subfamily. Type II alpha-neurotoxin sub-subfamily. Expressed by the venom gland.

Its subcellular location is the secreted. Its function is as follows. Binds with high affinity to muscular (alpha-1/CHRNA1) and neuronal (alpha-7/CHRNA7) nicotinic acetylcholine receptor (nAChR) and inhibits acetylcholine from binding to the receptor, thereby impairing neuromuscular and neuronal transmission. The polypeptide is Long neurotoxin 7 (Naja sputatrix (Malayan spitting cobra)).